Reading from the N-terminus, the 1148-residue chain is Ice nucleation protein (1148 aa).

3 disordered regions span residues 110 to 131 (ADPASTSTSTSTSTLTPMPTAI), 222 to 256 (YGSTQTSGEDSSLTAGYGSTQTAQEGSNLTAGYGS), and 367 to 394 (GSTQTSGSDSSLTAGYGSTQTAQEGSNL). A compositionally biased stretch (low complexity) spans 114-128 (STSTSTSTSTLTPMP). Positions 180–1099 (ATYGSTLSGD…LSAGEDSTLI (920 aa)) are octapeptide periodicity. Residues 230 to 250 (EDSSLTAGYGSTQTAQEGSNL) show a composition bias toward polar residues.

The protein belongs to the bacterial ice nucleation protein family.

The protein resides in the cell outer membrane. Functionally, ice nucleation proteins enable bacteria to nucleate crystallization in supercooled water. This chain is Ice nucleation protein (inaK), found in Pseudomonas syringae.